Consider the following 586-residue polypeptide: Mitogen-activated protein kinase 15 (586 aa).

In terms of domain architecture, Protein kinase spans 14 to 305; sequence YDIKKRLGKG…AEEALEHPYV (292 aa). ATP is bound by residues 20-28 and lysine 43; that span reads LGKGAYGIV. Aspartate 138 functions as the Proton acceptor in the catalytic mechanism. 2 disordered regions span residues 354 to 506 and 520 to 539; these read QKRE…DAPP and NQRT…RFGR. Over residues 382–393 the composition is skewed to pro residues; it reads PAPPAGTNPAPQ. Residues 400–414 show a composition bias toward low complexity; the sequence is PQRAAIAAPNQPPAQ. The span at 415-439 shows a compositional bias: polar residues; that stretch reads KDSTQQSPKIKAPSSNPITHSTTHG. Positions 452-463 are enriched in low complexity; sequence AGQQGAAGTTAQ. Positions 464–473 are enriched in basic and acidic residues; it reads EVRKEVESRS. A compositionally biased stretch (polar residues) spans 484–498; it reads FSHSQQARAAATNSA.

As to quaternary structure, interacts with dvl2.

It localises to the cytoplasm. The protein localises to the cytoskeleton. The protein resides in the cilium basal body. It is found in the cell projection. Its subcellular location is the cilium. It localises to the cell junction. The catalysed reaction is L-seryl-[protein] + ATP = O-phospho-L-seryl-[protein] + ADP + H(+). It catalyses the reaction L-threonyl-[protein] + ATP = O-phospho-L-threonyl-[protein] + ADP + H(+). Its function is as follows. Atypical MAPK protein that regulates ciliogenesis by phosphorylating rcsd1 through its binding with dvl2. In Xenopus laevis (African clawed frog), this protein is Mitogen-activated protein kinase 15.